A 69-amino-acid chain; its full sequence is Pancreatic propolypeptide YG (69 aa).

This sequence belongs to the NPY family.

Its subcellular location is the secreted. The chain is Pancreatic propolypeptide YG from Lophius americanus (American angler).